The following is a 1520-amino-acid chain: MSDSDSEFSIEDSPKKKTAPKKEKASPKKKKDDANESMVMTEEDRNVFTSIDKKGGGSKQMAIEDIYQKKSQLEHILLRPDTYIGSVEHTEKTPMWVYNMEESKLEQRDISYVPGLYKIYDEILVNAADNKQRDPKMNTIKITINKEKNEISVYNNGKGIPVTQHKVEKVYVPELIFGTLLTSSNYNDDEKKVTGGRNGYGAKLCNIFSTKFTLETSSRDYKSAFKQTWIKNMTRDEEPKIVKSTDEDFTKITFSPDLAKFKMKELDDDICHLMARRAYDVAGSSKGVAVFLNGKRIPIKGFEDYVQMYTSQFNNEGEPLKIAYEQVGDRWQVALALSEKGFQQVSFVNSIATTKGGRHVDYVADQMVAKFIDSIKRKLTKTSMNIKPFQIKNHMWVFVNCLIENPTFDSQTKETMTLQQKQFGSTCVLSEKFSKAASSVGITDAVMSWVRFKQMDDLNKKCSKTKTSKLKGIPKLEDANDAGTKNSQQCTLILTEGDSAKTLAVSGLSVVGRDKYGVFPLRGKLLNVREGNMKQIADNAEVNAMIKILGLQYKKKYETEDDFKTLRYGKLMVMADQDQDGSHIKGLVINFIHHFWPSLIQRNFVEEFITPIVKATKGKEEVSFYSLPEYSEWRMNTDNWKSYKIKYYKGLGTSTSKEAKEYFLDMVRHRIRFKYNGADDDNAVDMAFSKKKIEERKDWLSKWMREKKDRKQQGLAEEYLYNKDTRFVTFKDFVNRELVLFSNLDNERSIPCLVDGFKPGQRKVLFACFKRADKREVKVAQLAGAVAEISAYHHGEQSLMGTIVNLAQDYVGSNNINLLLPIGQFGTRLQGGKDSASARYIFTQLSPVTRTLFPAHDDNVLRFLYEENQRIEPEWYCPIIPMVLVNGAQGIGTGWSTNIPNYNPRELVKNIKRLIAGEPQKALAPWYKNFRGKIIQIDPSRFACYGEVAVLDDNTIEITELPIKQWTQDYKEKVLEGLMESSDKKSPVIVDYKEYHTDTTVKFVVKLSPGKLRELERGQDLHQVFKLQAVINTTCMVLFDAAGCLRTYTSPEAITQEFYDSRQEKYVQRKEYLLGVLQAQSKRLTNQARFILAKINNEIVLENKKKAAIVDVLIKMKFDADPVKKWKEEQKLKELRESGEIELDEDDLAAVAVEEDEAISSAAKAVETKLSDYDYLVGMALIKLSEEEKNKLIKESEEKMAEVRVIEKKTWQDLWHEDLDNFVSELDKQEAREKADQDASIKNAAKKLAADAKTGRGPKKNVCTEVLPSKDGQRIEPMLDAATKAKYEKMSQPKKERVKKEPKEPKEPKKVKKEGQDIKKFMSPAAPKTAKKEKSDGFNSDMSEESDVEFDEGIDFDSDDDGVEREDVVSKPKPRTGKGAAKAEVIDLSDDDEVPAKKPAPAKKAAPKKKKSEFSDLSGGDSDEEAEKKPSTSKKPSPKKAAPKTAEPKSKAVTDFFGASKKNGKKAAGSDDEDDESFVVAPREKSGRARKAPPTYDVDSGSDSDQPKKKRGRVVDSDSD.

A compositionally biased stretch (acidic residues) spans 1–10 (MSDSDSEFSI). The segment at 1 to 40 (MSDSDSEFSIEDSPKKKTAPKKEKASPKKKKDDANESMVM) is disordered. The segment covering 12–34 (DSPKKKTAPKKEKASPKKKKDDA) has biased composition (basic and acidic residues). ATP is bound by residues Asn126, Asn155, 183 to 185 (SSN), 196 to 203 (GRNGYGAK), and 411 to 413 (QTK). The region spanning 490–607 (CTLILTEGDS…SLIQRNFVEE (118 aa)) is the Toprim domain. Mg(2+) contacts are provided by Glu496, Asp576, and Asp578. Positions 750–1219 (IPCLVDGFKP…TWQDLWHEDL (470 aa)) constitute a Topo IIA-type catalytic domain. Residue Tyr840 is the O-(5'-phospho-DNA)-tyrosine intermediate of the active site. The interval 1249–1520 (AADAKTGRGP…RGRVVDSDSD (272 aa)) is disordered. The span at 1283-1320 (TKAKYEKMSQPKKERVKKEPKEPKEPKKVKKEGQDIKK) shows a compositional bias: basic and acidic residues. The span at 1342–1364 (MSEESDVEFDEGIDFDSDDDGVE) shows a compositional bias: acidic residues.

This sequence belongs to the type II topoisomerase family. In terms of assembly, homodimer. Interacts with nmad-1; the interaction is required for localization of top-2 to DNA. Interacts with gcna-1; this interaction allows the resolution of topoisomerase 2 DNA-protein cross-links. Mg(2+) is required as a cofactor. It depends on Mn(2+) as a cofactor. Requires Ca(2+) as cofactor. In terms of tissue distribution, expressed in the hermaphrodite and male germline.

Its subcellular location is the nucleus. The protein resides in the nucleoplasm. The protein localises to the chromosome. It localises to the cytoplasm. It is found in the cytoskeleton. Its subcellular location is the spindle. It carries out the reaction ATP-dependent breakage, passage and rejoining of double-stranded DNA.. Control of topological states of DNA by transient breakage and subsequent rejoining of DNA strands. Topoisomerase II makes double-strand breaks. Essential during mitosis in the adult germline and during embryogenesis for proper segregation of daughter chromosomes. Required for centromere resolution during mitosis. Required for chromosome segregation in anaphase of meiosis I during spermatogenesis. Promotes cleavage furrow stability during cytokinesis upon the presence of chromatin obstructions. Promotes DNA break formation upon zygotic genome activation in the Z2 and Z3 primordial germ cells in L1 larvae, thereby activating a checkpoint response. Essential for embryogenesis. The sequence is that of DNA topoisomerase 2 top-2 from Caenorhabditis elegans.